A 151-amino-acid polypeptide reads, in one-letter code: Myosin catalytic light chain, smooth muscle (151 aa).

The residue at position 1 (alanine 1) is an N-acetylalanine. EF-hand domains are found at residues 6-41 (DRITECQEAFELFDRSAEGKVFLGQVGDILRALGQN), 83-118 (GSYEDFVEGLRVFDKENNGKIMGAELRHVLSTLGEK), and 119-151 (MSEEEVEESLLQGQQDPNGCIHYEEFSKYLLEG).

Functionally, in molluscan muscle, calcium regulation is associated with myosin rather than with actin. Muscle myosin contains two types of light chains: the catalytic light chain, essential for ATPase activity, and the regulatory light chain, a calcium-binding protein responsible for Ca(2+) dependent binding and Ca(2+) dependent Mg-ATPase activity. The chain is Myosin catalytic light chain, smooth muscle from Halocynthia roretzi (Sea squirt).